Reading from the N-terminus, the 972-residue chain is POM121-like protein 2 (972 aa).

6 disordered regions span residues 1–67 (MGSY…PANP), 281–302 (LKKAGESPNSHLSVTPSSSGQL), 328–359 (TEEDPTLEGQAVPSNQTTEATTGTAGDSIPEM), 406–431 (GISSDSNPSIASTQASPSSPTTPVTD), 676–726 (LGLS…AIDG), and 953–972 (SKTLRNREPGRSRKHHTYKK). Positions 40–57 (RVQHVHRAQPARRHRPAR) are enriched in basic residues. 2 stretches are compositionally biased toward polar residues: residues 287 to 302 (SPNSHLSVTPSSSGQL) and 339 to 352 (VPSNQTTEATTGTA). Residues 413–431 (PSIASTQASPSSPTTPVTD) show a composition bias toward low complexity. Over residues 677 to 696 (GLSSTNQPPVTSSNSNVTSA) the composition is skewed to polar residues. Residues 697-706 (LTSSLGSSPK) show a composition bias toward low complexity.

It belongs to the POM121 family.

The chain is POM121-like protein 2 (Pom121l2) from Mus musculus (Mouse).